Consider the following 348-residue polypeptide: L-threonine 3-dehydrogenase (348 aa).

C42 provides a ligand contact to Zn(2+). Catalysis depends on charge relay system residues T44 and H47. Zn(2+)-binding residues include H67, E68, C97, C100, C103, and C111. Residues L179, E199, R204, 266–268 (LGL), and 291–292 (IT) contribute to the NAD(+) site.

This sequence belongs to the zinc-containing alcohol dehydrogenase family. In terms of assembly, homodimer. Homotetramer; dimer of dimers. Zn(2+) is required as a cofactor.

It is found in the cytoplasm. It catalyses the reaction L-threonine + NAD(+) = (2S)-2-amino-3-oxobutanoate + NADH + H(+). It functions in the pathway amino-acid degradation; L-threonine degradation via oxydo-reductase pathway; glycine from L-threonine: step 1/2. Its activity is regulated as follows. Is totally inhibited by EDTA in vitro. Its function is as follows. Catalyzes the NAD(+)-dependent oxidation of L-threonine to 2-amino-3-ketobutyrate. Is much less efficient when using NADP(+) instead of NAD(+). To a lesser extent, also catalyzes the oxidation of L-serine and DL-threo-3-phenylserine, but not that of L-allo-threonine, D-threonine and D-allo-threonine and many other L-amino acids. The protein is L-threonine 3-dehydrogenase of Pyrococcus horikoshii (strain ATCC 700860 / DSM 12428 / JCM 9974 / NBRC 100139 / OT-3).